Here is a 169-residue protein sequence, read N- to C-terminus: Regulator of sigma D (169 aa).

Belongs to the Rsd/AlgQ family. In terms of assembly, interacts with RpoD.

It is found in the cytoplasm. Binds RpoD and negatively regulates RpoD-mediated transcription activation by preventing the interaction between the primary sigma factor RpoD with the catalytic core of the RNA polymerase and with promoter DNA. May be involved in replacement of the RNA polymerase sigma subunit from RpoD to RpoS during the transition from exponential growth to the stationary phase. This chain is Regulator of sigma D, found in Yersinia pestis.